Consider the following 468-residue polypeptide: MSSGKIAQVVGPVVDVVFASGDKLPEINNALIVYKNGDKSQKVVLEVTLELGDGLVRTIAMESTDGLTRGLEVLDTGRAISVPVGKDTLGRVFNVLGDAIDLEEPFAEDAERQPIHKKAPSFDELSTSSEILETGIKVIDLLAPYLKGGKVGLFGGAGVGKTVLIQELIHNIAQEHGGISVFTGVGERTREGNDLYWEMKESGVIEKTAMVFGQMNEPPGARMRVALTGLTIAEYFRDVEGQDVLLFIDNIFRFTQAGSEVSALLGRMPSAVGYQPTLATEMGQLQERITSTKKGSVTSIQAIYVPADDYTDPAPATAFAHLDSTTNLERKLTQMGIYPAVDPLASSSRALTPEIVGDEHYEVATEVQRVLQRYRELQDIIAILGMDELSDEEKTLVGRARRIQFFLSQNFNVAETFTGQPGSYVPVEETVRGFKEILDGKHDQIPEDAFRMVGGIEDVIAKAEKMNY.

155 to 162 (GGAGVGKT) lines the ATP pocket.

It belongs to the ATPase alpha/beta chains family. F-type ATPases have 2 components, CF(1) - the catalytic core - and CF(0) - the membrane proton channel. CF(1) has five subunits: alpha(3), beta(3), gamma(1), delta(1), epsilon(1). CF(0) has three main subunits: a(1), b(2) and c(9-12). The alpha and beta chains form an alternating ring which encloses part of the gamma chain. CF(1) is attached to CF(0) by a central stalk formed by the gamma and epsilon chains, while a peripheral stalk is formed by the delta and b chains.

The protein resides in the cell membrane. The enzyme catalyses ATP + H2O + 4 H(+)(in) = ADP + phosphate + 5 H(+)(out). In terms of biological role, produces ATP from ADP in the presence of a proton gradient across the membrane. The catalytic sites are hosted primarily by the beta subunits. This chain is ATP synthase subunit beta, found in Streptococcus agalactiae serotype III (strain NEM316).